The primary structure comprises 217 residues: Response regulator RR06 (217 aa).

In terms of domain architecture, Response regulatory spans 2–115 (NILVADDEEM…LLVKRIKALI (114 aa)). Position 51 is a 4-aspartylphosphate (aspartate 51). Residues 122–217 (EDIWRYQDVT…VKNVGYKISL (96 aa)) constitute a DNA-binding region (ompR/PhoB-type).

Phosphorylated at threonine residues by StkP; threonine phosphorylation enhances RR06 binding to DNA and may also increase expression of CbpA. May be de-phosphorylated by PhpP.

In terms of biological role, member of the two-component regulatory system HK06/RR06 involved in regulation of target genes, including choline-binding protein CbpA. Binds to the promoter region of CbpA and directly activates transcription. The chain is Response regulator RR06 from Streptococcus pneumoniae serotype 2 (strain D39 / NCTC 7466).